Here is a 310-residue protein sequence, read N- to C-terminus: Methionyl-tRNA formyltransferase (310 aa).

109-112 (SLLP) contacts (6S)-5,6,7,8-tetrahydrofolate.

Belongs to the Fmt family.

It catalyses the reaction L-methionyl-tRNA(fMet) + (6R)-10-formyltetrahydrofolate = N-formyl-L-methionyl-tRNA(fMet) + (6S)-5,6,7,8-tetrahydrofolate + H(+). In terms of biological role, attaches a formyl group to the free amino group of methionyl-tRNA(fMet). The formyl group appears to play a dual role in the initiator identity of N-formylmethionyl-tRNA by promoting its recognition by IF2 and preventing the misappropriation of this tRNA by the elongation apparatus. In Macrococcus caseolyticus (strain JCSC5402) (Macrococcoides caseolyticum), this protein is Methionyl-tRNA formyltransferase.